The primary structure comprises 163 residues: UPF0303 protein SAV_5210 (163 aa).

The protein belongs to the UPF0303 family.

The sequence is that of UPF0303 protein SAV_5210 from Streptomyces avermitilis (strain ATCC 31267 / DSM 46492 / JCM 5070 / NBRC 14893 / NCIMB 12804 / NRRL 8165 / MA-4680).